We begin with the raw amino-acid sequence, 427 residues long: Glutamate-1-semialdehyde 2,1-aminomutase (427 aa).

K265 is subject to N6-(pyridoxal phosphate)lysine.

The protein belongs to the class-III pyridoxal-phosphate-dependent aminotransferase family. HemL subfamily. In terms of assembly, homodimer. Pyridoxal 5'-phosphate serves as cofactor.

Its subcellular location is the cytoplasm. The enzyme catalyses (S)-4-amino-5-oxopentanoate = 5-aminolevulinate. Its pathway is porphyrin-containing compound metabolism; protoporphyrin-IX biosynthesis; 5-aminolevulinate from L-glutamyl-tRNA(Glu): step 2/2. The protein is Glutamate-1-semialdehyde 2,1-aminomutase of Neisseria meningitidis serogroup C (strain 053442).